The following is a 160-amino-acid chain: Nucleotide-binding protein VF_1240 (160 aa).

This sequence belongs to the YajQ family.

In terms of biological role, nucleotide-binding protein. The sequence is that of Nucleotide-binding protein VF_1240 from Aliivibrio fischeri (strain ATCC 700601 / ES114) (Vibrio fischeri).